The chain runs to 279 residues: NAD kinase (279 aa).

Asp57 (proton acceptor) is an active-site residue. Residues 57–58 (DG), 133–134 (NE), Arg159, Asp161, and 172–177 (TAYNKS) each bind NAD(+).

It belongs to the NAD kinase family. A divalent metal cation is required as a cofactor.

The protein resides in the cytoplasm. It carries out the reaction NAD(+) + ATP = ADP + NADP(+) + H(+). Its function is as follows. Involved in the regulation of the intracellular balance of NAD and NADP, and is a key enzyme in the biosynthesis of NADP. Catalyzes specifically the phosphorylation on 2'-hydroxyl of the adenosine moiety of NAD to yield NADP. The sequence is that of NAD kinase from Streptococcus pyogenes serotype M12 (strain MGAS2096).